Reading from the N-terminus, the 282-residue chain is HTH-type transcriptional activator RhaR (282 aa).

The region spanning 179–277 (DKLITRLAAS…GMTPSQWRHL (99 aa)) is the HTH araC/xylS-type domain. 2 consecutive DNA-binding regions (H-T-H motif) follow at residues 196–217 (DKFCDEASCSERVLRQQFRQQT) and 244–267 (ISDISTECGFEDSNYFSVVFTRET).

As to quaternary structure, binds DNA as a dimer.

The protein localises to the cytoplasm. Activates expression of the rhaSR operon in response to L-rhamnose. This Escherichia coli O1:K1 / APEC protein is HTH-type transcriptional activator RhaR.